A 147-amino-acid polypeptide reads, in one-letter code: Insertion element IS402 uncharacterized 16.2 kDa protein (147 aa).

The disordered stretch occupies residues 106–147; sequence DSSSIRAVGAGQKLGQTPPIARDPVPSTTSSPTPTVRRSPRS. Residues 129–147 are compositionally biased toward low complexity; it reads PVPSTTSSPTPTVRRSPRS.

The protein belongs to the transposase 6 family.

This Burkholderia cepacia (Pseudomonas cepacia) protein is Insertion element IS402 uncharacterized 16.2 kDa protein.